The primary structure comprises 117 residues: Immunoglobulin kappa variable 1-9 (117 aa).

The first 22 residues, 1–22 (MDMRVPAQLLGLLLLWLPGARC), serve as a signal peptide directing secretion. The interval 23–45 (DIQLTQSPSFLSASVGDRVTITC) is framework-1. Residues 24–117 (IQLTQSPSFL…YYCQQLNSYP (94 aa)) form the Ig-like domain. Cys45 and Cys110 are oxidised to a cystine. The interval 46–56 (RASQGISSYLA) is complementarity-determining-1. A framework-2 region spans residues 57–71 (WYQQKPGKAPKLLIY). Residues 72-78 (AASTLQS) are complementarity-determining-2. The interval 79–110 (GVPSRFSGSGSGTEFTLTISSLQPEDFATYYC) is framework-3. The tract at residues 111-117 (QQLNSYP) is complementarity-determining-3.

Immunoglobulins are composed of two identical heavy chains and two identical light chains; disulfide-linked.

It localises to the secreted. Its subcellular location is the cell membrane. In terms of biological role, v region of the variable domain of immunoglobulin light chains that participates in the antigen recognition. Immunoglobulins, also known as antibodies, are membrane-bound or secreted glycoproteins produced by B lymphocytes. In the recognition phase of humoral immunity, the membrane-bound immunoglobulins serve as receptors which, upon binding of a specific antigen, trigger the clonal expansion and differentiation of B lymphocytes into immunoglobulins-secreting plasma cells. Secreted immunoglobulins mediate the effector phase of humoral immunity, which results in the elimination of bound antigens. The antigen binding site is formed by the variable domain of one heavy chain, together with that of its associated light chain. Thus, each immunoglobulin has two antigen binding sites with remarkable affinity for a particular antigen. The variable domains are assembled by a process called V-(D)-J rearrangement and can then be subjected to somatic hypermutations which, after exposure to antigen and selection, allow affinity maturation for a particular antigen. This is Immunoglobulin kappa variable 1-9 from Homo sapiens (Human).